The chain runs to 203 residues: Twist-related protein 1 (203 aa).

Low complexity predominate over residues M1–S18. Residues M1 to L107 form a disordered region. The segment covering R34–R43 has biased composition (basic residues). 2 stretches are compositionally biased toward gly residues: residues A46–E65 and G80–S100. One can recognise a bHLH domain in the interval T109 to L160. A sufficient for transactivation activity region spans residues R162 to R192.

Efficient DNA binding requires dimerization with another bHLH protein. Homodimer or heterodimer with E proteins such as TCF3. ID1 binds preferentially to TCF3 but does not interact efficiently with TWIST1 so ID1 levels control the amount of TCF3 available to dimerize with TWIST and thus determine the type of dimer formed.

Its subcellular location is the nucleus. In terms of biological role, acts as a transcriptional regulator. Inhibits myogenesis by sequestrating E proteins, inhibiting trans-activation by MEF2, and inhibiting DNA-binding by MYOD1 through physical interaction. This interaction probably involves the basic domains of both proteins. Also represses expression of pro-inflammatory cytokines such as TNFA and IL1B. Regulates cranial suture patterning and fusion. Activates transcription as a heterodimer with E proteins. Regulates gene expression differentially, depending on dimer composition. Homodimers induce expression of FGFR2 and POSTN while heterodimers repress FGFR2 and POSTN expression and induce THBS1 expression. Heterodimerization is also required for osteoblast differentiation. Represses the activity of the circadian transcriptional activator: NPAS2-BMAL1 heterodimer. The sequence is that of Twist-related protein 1 (TWIST1) from Gorilla gorilla gorilla (Western lowland gorilla).